Here is a 3298-residue protein sequence, read N- to C-terminus: Protocadherin-16 (3298 aa).

The first 42 residues, 1–42, serve as a signal peptide directing secretion; that stretch reads MQKELGIVPSCPGMKSPRPHLLLPLLLLLLLLLGAGVPGAWG. Cadherin domains are found at residues 43 to 143, 144 to 255, 256 to 362, 367 to 472, 474 to 578, 579 to 685, 686 to 790, 791 to 894, 895 to 1000, 1001 to 1111, 1112 to 1211, 1218 to 1324, 1333 to 1436, 1437 to 1546, 1547 to 1649, 1650 to 1751, 1752 to 1855, 1856 to 1960, 1965 to 2068, 2069 to 2171, 2172 to 2277, 2278 to 2376, 2377 to 2482, 2483 to 2602, 2603 to 2706, 2707 to 2813, and 2814 to 2933; these read QAGS…APAF, PQAR…APAF, NQSR…QPSM, LSAD…APAF, RQLY…EPQF, QRTF…PPQF, YPRE…PPIF, EQLQ…SPAF, PAPE…APRF, NSPT…DPTF, LAVA…SPTF, AGGG…PPDL, VPVV…APAF, ARDP…APVF, ASPS…APTF, QQQE…APTF, GSAH…APAF, PVPA…APTF, LRLR…GPRF, PRAS…APRF, LRPH…RPTI, PQPW…APAF, SQSL…APSF, TLSH…PPVF, TRAS…GPAF, PLNL…DPVF, and LAPA…APDL. The Extracellular portion of the chain corresponds to 43–2940; that stretch reads QAGSLDLQID…PDLNLLLVGA (2898 aa). 3 N-linked (GlcNAc...) asparagine glycosylation sites follow: asparagine 217, asparagine 256, and asparagine 402. An N-linked (GlcNAc...) asparagine glycan is attached at asparagine 584. A glycan (N-linked (GlcNAc...) asparagine) is linked at asparagine 1249. N-linked (GlcNAc...) asparagine glycosylation occurs at asparagine 1521. The N-linked (GlcNAc...) asparagine glycan is linked to asparagine 1718. Asparagine 1996 is a glycosylation site (N-linked (GlcNAc...) asparagine). A disordered region spans residues 2065–2094; it reads GPRFPRASSEATIRENAPPGTPIVSPRAVH. 3 N-linked (GlcNAc...) asparagine glycosylation sites follow: asparagine 2361, asparagine 2428, and asparagine 2569. Residues asparagine 2761, asparagine 2792, and asparagine 2862 are each glycosylated (N-linked (GlcNAc...) asparagine). A helical membrane pass occupies residues 2941-2961; that stretch reads VAASLGVVVVLALAALVLGLV. The Cytoplasmic portion of the chain corresponds to 2962-3298; it reads RARSRKAEAA…EPPDDTELHI (337 aa). The disordered stretch occupies residues 2986-3040; sequence LQKLGREPPSPPPSEHLYHQTLPSYGGPGAGGPYPRGGSLDPSHSSGRGSAEAAE. Residues 3011 to 3020 show a composition bias toward gly residues; it reads GGPGAGGPYP. At serine 3055 the chain carries Phosphoserine. 2 disordered regions span residues 3062–3082 and 3233–3298; these read ARGPDSGIQQDADGLSDTSCE and ASHR…ELHI. Composition is skewed to low complexity over residues 3244–3266 and 3276–3289; these read SLSSAAMSPSFSPSLSPLAARSP and GPSASALSAESGLE.

Heterophilic interaction with FAT4; this interaction affects their respective protein levels. Expressed in fibroblasts but not in melanocytes or keratinocytes.

The protein localises to the cell membrane. Calcium-dependent cell-adhesion protein. Mediates functions in neuroprogenitor cell proliferation and differentiation. In the heart, has a critical role for proper morphogenesis of the mitral valve, acting in the regulation of cell migration involved in valve formation. This Homo sapiens (Human) protein is Protocadherin-16 (DCHS1).